The following is a 908-amino-acid chain: Protein translocase subunit SecA (908 aa).

ATP-binding positions include glutamine 87, 105 to 109 (GEGKT), and aspartate 513. Low complexity predominate over residues 852–863 (ARRAQAQHATAE). The interval 852 to 908 (ARRAQAQHATAENQLADDEAEAASPQTVVRDERKVGRNEPCPCGSGKKYKQCHGKID) is disordered. Cysteine 892, cysteine 894, cysteine 903, and histidine 904 together coordinate Zn(2+). Residues 898–908 (KKYKQCHGKID) are compositionally biased toward basic residues.

The protein belongs to the SecA family. As to quaternary structure, monomer and homodimer. Part of the essential Sec protein translocation apparatus which comprises SecA, SecYEG and auxiliary proteins SecDF-YajC and YidC. The cofactor is Zn(2+).

The protein localises to the cell inner membrane. The protein resides in the cytoplasm. It catalyses the reaction ATP + H2O + cellular proteinSide 1 = ADP + phosphate + cellular proteinSide 2.. In terms of biological role, part of the Sec protein translocase complex. Interacts with the SecYEG preprotein conducting channel. Has a central role in coupling the hydrolysis of ATP to the transfer of proteins into and across the cell membrane, serving both as a receptor for the preprotein-SecB complex and as an ATP-driven molecular motor driving the stepwise translocation of polypeptide chains across the membrane. This chain is Protein translocase subunit SecA, found in Vibrio atlanticus (strain LGP32) (Vibrio splendidus (strain Mel32)).